The chain runs to 507 residues: Cytochrome P450 monooxygenase cloA (507 aa).

A helical membrane pass occupies residues 15–35 (WTWILLTTCIALISPLVLKGI). N-linked (GlcNAc...) asparagine glycosylation is present at asparagine 247. Residue cysteine 450 coordinates heme.

Belongs to the cytochrome P450 family. Heme serves as cofactor.

The protein localises to the membrane. The protein operates within alkaloid biosynthesis; ergot alkaloid biosynthesis. Its function is as follows. Cytochrome P450 monooxygenase; part of the gene cluster that mediates the biosynthesis of fungal ergot alkaloid. DmaW catalyzes the first step of ergot alkaloid biosynthesis by condensing dimethylallyl diphosphate (DMAP) and tryptophan to form 4-dimethylallyl-L-tryptophan. The second step is catalyzed by the methyltransferase easF that methylates 4-dimethylallyl-L-tryptophan in the presence of S-adenosyl-L-methionine, resulting in the formation of 4-dimethylallyl-L-abrine. The catalase easC and the FAD-dependent oxidoreductase easE then transform 4-dimethylallyl-L-abrine to chanoclavine-I which is further oxidized by easD in the presence of NAD(+), resulting in the formation of chanoclavine-I aldehyde. Agroclavine dehydrogenase easG then mediates the conversion of chanoclavine-I aldehyde to agroclavine via a non-enzymatic adduct reaction: the substrate is an iminium intermediate that is formed spontaneously from chanoclavine-I aldehyde in the presence of glutathione. The presence of easA is not required to complete this reaction. Further conversion of agroclavine to paspalic acid is a two-step process involving oxidation of agroclavine to elymoclavine and of elymoclavine to paspalic acid, the second step being performed by the elymoclavine oxidase cloA. Paspalic acid is then further converted to D-lysergic acid. Ergopeptines are assembled from D-lysergic acid and three different amino acids by the D-lysergyl-peptide-synthetases composed each of a monomudular and a trimodular nonribosomal peptide synthetase subunit. LpsB and lpsC encode the monomodular subunits responsible for D-lysergic acid activation and incorporation into the ergopeptine backbone. LpsA1 and A2 subunits encode the trimodular nonribosomal peptide synthetase assembling the tripeptide portion of ergopeptines. LpsA1 is responsible for formation of the major ergopeptine, ergotamine, and lpsA2 for alpha-ergocryptine, the minor ergopeptine of the total alkaloid mixture elaborated by C.purpurea. D-lysergyl-tripeptides are assembled by the nonribosomal peptide synthetases and released as N-(D-lysergyl-aminoacyl)-lactams. Cyclolization of the D-lysergyl-tripeptides is performed by the Fe(2+)/2-ketoglutarate-dependent dioxygenase easH which introduces a hydroxyl group into N-(D-lysergyl-aminoacyl)-lactam at alpha-C of the aminoacyl residue followed by spontaneous condensation with the terminal lactam carbonyl group. This is Cytochrome P450 monooxygenase cloA from Claviceps purpurea (strain 20.1) (Ergot fungus).